The sequence spans 781 residues: MLVLMLVVATTFRLCPLVKARPLCRIRTLRTGKVFPVEEKIQGDRLYFSSGKTHLIKHPCKKNLALYLGRQIFLTKDTFESSLIPFSIPTSMQVGTPEVTSAHFAGSVLLLVVNQKVYVYDYEANFWTASTGIQHPVSHVSGDNCCYSGNSFCMDISNSVFAYLRGDQVSQANIYFSNSRGYRFQKYTQERRAELVGTFGGIFSFHSLSQVGLLLVDEQMAMFSYSDHPLNRSFGLPFDYDRALDILIAPGQKGILIFWSEKNLLVSRNSGQLVESVQVREGQRILYNSIVKANVTIHSVAANENELAVLTEENNLYYGSLGIQSSSLIKFADQNIWSQEAVLMFTDVGMLEILTPLRDVLFPAFDFQKCRLNIQALLMDPQLQAGVCKVELLQGEFENKMYTIDMNSQLELTALMIPRPGMLPVPLVSVSNPHSLGLQAVICEDGYTYDGNTKHRLNISLKQQHHWGRADPNFTSSIKRPTISTITLDIANKEISCVDLKPLTALISVGCDLEKKIVIQNELSACYHGVLDPVALQDNYSYIIEREAYDPNFQGQQAKKDLEVHYPYEKLGCPLLAYYDIPWKPVVELWREGKFQEVVEAEYVLLEMNGLFTYTYSLTASTAGCSAQPQNWTTITKMAGDTAPFSWDRENYISCHDPNYHEPLRWPDVPYQILGGQTENKVVFDQRNGIYIFFISIVDPSYSYCRLETTFSVYVYGAFPLSIFPPEITIVLLTAATLLSIWLAYMIPQLLHTEQGLEGNGFWVRLYQRCRKSCACLWGRC.

The signal sequence occupies residues 1-20 (MLVLMLVVATTFRLCPLVKA). The Extracellular portion of the chain corresponds to 21-725 (RPLCRIRTLR…YGAFPLSIFP (705 aa)). 7 disulfides stabilise this stretch: Cys24-Cys370, Cys60-Cys146, Cys145-Cys153, Cys388-Cys497, Cys511-Cys705, Cys526-Cys573, and Cys625-Cys655. N-linked (GlcNAc...) asparagine glycans are attached at residues Asn231, Asn294, Asn458, Asn473, Asn539, and Asn631. A helical transmembrane segment spans residues 726–749 (PEITIVLLTAATLLSIWLAYMIPQ). Residues 750–781 (LLHTEQGLEGNGFWVRLYQRCRKSCACLWGRC) are Cytoplasmic-facing.

It belongs to the CATSPERD family. Component of the CatSper complex or CatSpermasome composed of the core pore-forming members CATSPER1, CATSPER2, CATSPER3 and CATSPER4 as well as auxiliary members CATSPERB, CATSPERG, CATSPERD, CATSPERE, CATSPERZ, C2CD6/CATSPERT, TMEM249, TMEM262 and EFCAB9. HSPA1 may be an additional auxiliary complex member. The core complex members CATSPER1, CATSPER2, CATSPER3 and CATSPER4 form a heterotetrameric channel. The auxiliary CATSPERB, CATSPERG, CATSPERD and CATSPERE subunits form a pavilion-like structure over the pore which stabilizes the complex through interactions with CATSPER4, CATSPER3, CATSPER1 and CATSPER2 respectively. TMEM262/CATSPERH interacts with CATSPERB, further stabilizing the complex. C2CD6/CATSPERT interacts at least with CATSPERD and is required for targeting the CatSper complex in the flagellar membrane.

The protein localises to the cell projection. It localises to the cilium. The protein resides in the flagellum membrane. Its function is as follows. Auxiliary component of the CatSper complex, a complex involved in sperm cell hyperactivation. Sperm cell hyperactivation is needed for sperm motility which is essential late in the preparation of sperm for fertilization. Required for CATSPER1 stability before intraflagellar transport and/or incorporation of the CatSper complex channel into the flagellar membrane. The polypeptide is Cation channel sperm-associated auxiliary subunit delta (Bos taurus (Bovine)).